The primary structure comprises 275 residues: Phosphatidylglycerol--prolipoprotein diacylglyceryl transferase (275 aa).

Helical transmembrane passes span 22–42, 61–81, 96–116, 125–145, 177–197, 204–224, and 238–258; these read LSVR…MWLA, LLFY…VLFY, IWTG…AMIW, FFTV…VGRI, SQLY…NLFW, GAIS…VEFV, and ISMG…MVWA. R144 contributes to the a 1,2-diacyl-sn-glycero-3-phospho-(1'-sn-glycerol) binding site.

It belongs to the Lgt family.

Its subcellular location is the cell inner membrane. It carries out the reaction L-cysteinyl-[prolipoprotein] + a 1,2-diacyl-sn-glycero-3-phospho-(1'-sn-glycerol) = an S-1,2-diacyl-sn-glyceryl-L-cysteinyl-[prolipoprotein] + sn-glycerol 1-phosphate + H(+). It participates in protein modification; lipoprotein biosynthesis (diacylglyceryl transfer). Functionally, catalyzes the transfer of the diacylglyceryl group from phosphatidylglycerol to the sulfhydryl group of the N-terminal cysteine of a prolipoprotein, the first step in the formation of mature lipoproteins. The chain is Phosphatidylglycerol--prolipoprotein diacylglyceryl transferase from Aeromonas salmonicida (strain A449).